A 65-amino-acid polypeptide reads, in one-letter code: Large ribosomal subunit protein bL35 (65 aa).

The protein belongs to the bacterial ribosomal protein bL35 family.

In Aromatoleum aromaticum (strain DSM 19018 / LMG 30748 / EbN1) (Azoarcus sp. (strain EbN1)), this protein is Large ribosomal subunit protein bL35.